Consider the following 490-residue polypeptide: GTPase Der (490 aa).

2 EngA-type G domains span residues 3–166 (PVVA…MDDV) and 203–376 (IKLA…DSST). Residues 9 to 16 (GRPNVGKS), 56 to 60 (DTGGI), 118 to 121 (NKTD), 209 to 216 (GRPNVGKS), 256 to 260 (DTAGV), and 321 to 324 (NKWD) each bind GTP. The KH-like domain occupies 377 to 461 (RRVSTAMLTR…PIRIQFKEGE (85 aa)).

Belongs to the TRAFAC class TrmE-Era-EngA-EngB-Septin-like GTPase superfamily. EngA (Der) GTPase family. As to quaternary structure, associates with the 50S ribosomal subunit.

GTPase that plays an essential role in the late steps of ribosome biogenesis. This chain is GTPase Der, found in Salmonella newport (strain SL254).